Here is a 407-residue protein sequence, read N- to C-terminus: Peptidase T (407 aa).

His82 contacts Zn(2+). Residue Asp84 is part of the active site. Asp143 contributes to the Zn(2+) binding site. The active-site Proton acceptor is Glu177. 3 residues coordinate Zn(2+): Glu178, Asp200, and His382.

Belongs to the peptidase M20B family. It depends on Zn(2+) as a cofactor.

The protein resides in the cytoplasm. It catalyses the reaction Release of the N-terminal residue from a tripeptide.. Cleaves the N-terminal amino acid of tripeptides. The chain is Peptidase T from Streptococcus pyogenes serotype M4 (strain MGAS10750).